The primary structure comprises 213 residues: Uracil phosphoribosyltransferase (213 aa).

Residues arginine 78, arginine 103, and 131 to 139 (DPMLATGGT) contribute to the 5-phospho-alpha-D-ribose 1-diphosphate site. Uracil contacts are provided by residues isoleucine 197 and 202-204 (GDA). Residue aspartate 203 participates in 5-phospho-alpha-D-ribose 1-diphosphate binding.

This sequence belongs to the UPRTase family. Mg(2+) serves as cofactor.

The catalysed reaction is UMP + diphosphate = 5-phospho-alpha-D-ribose 1-diphosphate + uracil. The protein operates within pyrimidine metabolism; UMP biosynthesis via salvage pathway; UMP from uracil: step 1/1. Its activity is regulated as follows. Allosterically activated by GTP. Its function is as follows. Catalyzes the conversion of uracil and 5-phospho-alpha-D-ribose 1-diphosphate (PRPP) to UMP and diphosphate. This is Uracil phosphoribosyltransferase from Bifidobacterium longum subsp. infantis (strain ATCC 15697 / DSM 20088 / JCM 1222 / NCTC 11817 / S12).